The primary structure comprises 554 residues: Rab GTPase-binding effector protein 2 (554 aa).

The span at 1–15 (MAAAPAALALDPQPQ) shows a compositional bias: low complexity. Disordered regions lie at residues 1–29 (MAAAPAALALDPQPQEEQKDASESSELSR), 167–250 (IQRR…ETAS), and 375–395 (EQLPSSALQGSEQQEDQDEAL). The stretch at 15-173 (QEEQKDASES…IQEIQRRPRQ (159 aa)) forms a coiled coil. The segment covering 16 to 29 (EEQKDASESSELSR) has biased composition (basic and acidic residues). 4 positions are modified to phosphoserine: Ser-176, Ser-180, Ser-187, and Ser-191. The stretch at 274–512 (DSQWEQLQVE…LETSEQVQRD (239 aa)) forms a coiled coil. The span at 377-386 (LPSSALQGSE) shows a compositional bias: polar residues.

This sequence belongs to the rabaptin family. As to quaternary structure, heterodimer with RABGEF1. The dimer binds RAB5A that has been activated by GTP-binding. Interacts with SDCCAG8; this interaction is important for ciliogenesis regulation. Interacts with RAB4A; this interaction may mediate VEGFR2 cell surface expression.

Its subcellular location is the cytoplasm. The protein resides in the early endosome. It is found in the cytoskeleton. It localises to the microtubule organizing center. The protein localises to the centrosome. Its subcellular location is the cilium basal body. Plays a role in membrane trafficking and in homotypic early endosome fusion. Participates in arteriogenesis by regulating vascular endothelial growth factor receptor 2/VEGFR2 cell surface expression and endosomal trafficking. By interacting with SDCCAG8, localizes to centrosomes and plays a critical role in ciliogenesis. In Rattus norvegicus (Rat), this protein is Rab GTPase-binding effector protein 2 (Rabep2).